A 1928-amino-acid polypeptide reads, in one-letter code: MELPWTALFLSTVLLGLSCQGSDWESDRNFISAAGPLTNDLVLNLNYPPGKQGSDVVSGNTDHLLCQQPLPSFLSQYFSSLRASQVTHYKVLLSWAQLLPTGSSKNPDQEAVQCYRQLLQSLKDAQLEPMVVLCHQTPPTSSAIQREGAFADLFADYATLAFQSFGDLVEIWFTFSDLEKVIMDLPHKDLKASALQTLSNAHRRAFEIYHRKFSSQGGKLSVVLKAEDIPELLPDPALAALVQGSVDFLSLDLSYECQSVATLPQKLSELQNLEPKVKVFIYTLKLEDCPATGTSPSSLLISLLEAINKDQIQTVGFDVNAFLSCTSNSEESPSCSLTDSLALQTEQQQETAVPSSPGSAYQRVWAAFANQSREERDAFLQDVFPEGFLWGISTGAFNVEGGWAEGGRGPSIWDHYGNLNAAEGQATAKVASDSYHKPASDVALLRGIRAQVYKFSISWSGLFPLGQKSTPNRQGVAYYNKLIDRLLDSHIEPMATLFHWDLPQALQEQGGWQNESVVEAFLDYAAFCFSTFGDRVKLWVTFHEPWVMSYAGYGTGQHAPAISDPGMASFKVAHLILKAHARTWHLYDLHHRLQQQGRVGIVLNSDLAEPLDRKSPQDLAAAERFLHFMLGWFAHPIFVDGDYPTTSAQIQHINQQCGHPLAQLPEFTEAEKRLLKGSADFLGLSHYTSRLISKAGRQTCTSSYDNIGGFSQHVDPEWPQTASPWIRVVPWGIRRLLRFASMEYTKGKLPIFLAGNGMPVGEEADLFDDSVRVNYFNWYINEVLKAVKEDLVDVRSYIVRSLIDGYEGPLGFSQRFGLYHVNFNDSSRPRTPRKSAYLFTSIIEKNGFSAKKVKRNPLPVRADFTSRARVTDSLPSEVPSKAKISVEKFSKQPRFERDLFYDGRFRDDFLWGVSSSPYQIEGGWNADGKGPSIWDNFTHTPGNGVKDNATGDVACDSYHQLDADLNILRTLKVKSYRFSISWSRIFPTGRNSTINKQGVDYYNRLIDSLVDNNIFPMVTLFHWDLPQALQDIGGWENPSLIELFDSYADYCFKTFGDRVKFWMTFNEPWCHVVLGYSSGIFPPSVQEPGWLPYKVSHIVIKAHARVYHTYDEKYRSEQKGVISLSLNTHWAEPKDPGLQRDVEAADRMLQFTMGWFAHPIFKNGDYPDVMKWTVGNRSELQHLASSRLPTFTEEEKNYVRGTADVFCHNTYTSVFVQHSTPRLNPPSYDDDMELKLIEMNSSTGVMHQDVPWGTRRLLNWIKEEYGNIPIYITENGQGLENPTLDDTERIFYHKTYINEALKAYKLDGVDLRGYSAWTLMDDFEWLLGYTMRFGLYYVDFNHVSRPRTARASARYYPDLIANNGMPLAREDEFLYGEFPKGFIWSAASASYQVEGAWRADGKGLSIWDTFSHTPLRIGNDDNGDVACDSYHKIAEDVVALQNLGVSHYRFSIAWSRILPDGTTKFINEAGLSYYVRFIDALLAAGITPQVTIYHWDLPQALQDVGGWENETIVQRFKEYADVLFQRLGDRVKFWITLNEPFVIAAQGYGTGVSAPGISFRPGTAPYIAGHNLIKAHAEAWHLYNDVYRARQGGTISITISSDWGEPRDPTNREHVEAARSYVQFMGGWFAHPIFKNGDYPEVMKTRIRDRSLGAGLNKSRLPEFTESEKSRIKGTFDFFGFNHNTTVLAYNLDYPAAFSSFDADRGVASIADSSWPVSGSFWLKVTPFGFRRILNWLKEEYNNPPIYVTENGVSRRGEPELNDTDRIYYLRSYINEALKAVHDKVDLRGYTVWSIMDNFEWATGFAERFGVHFVNRSDPSLPRIPRASAKFYATIVRCNGFPDPAQGPHPCLQQPEDAAPTASPVQSEVPFLGLMLGIAEAQTALYVLFALLLLGACSLAFLTYNTGRRSKQGNAQPSQHQLSPISSF.

The N-terminal stretch at 1 to 21 (MELPWTALFLSTVLLGLSCQG) is a signal peptide. Positions 22–867 (SDWESDRNFI…LPVRADFTSR (846 aa)) are cleaved as a propeptide — XBetaGly. Residues 22–1883 (SDWESDRNFI…LMLGIAEAQT (1862 aa)) lie on the Extracellular side of the membrane. The tract at residues 46 to 289 (NYPPGKQGSD…FIYTLKLEDC (244 aa)) is glycosyl hydrolase-1 1; Region I. Residues 364–856 (VWAAFANQSR…GFSAKKVKRN (493 aa)) form a glycosyl hydrolase-1 2; Region II region. N370, N514, N824, N936, N948, N991, and N1037 each carry an N-linked (GlcNAc...) asparagine glycan. The segment at 904-1367 (RFRDDFLWGV…DLIANNGMPL (464 aa)) is glycosyl hydrolase-1 3; Region III. Phlorizin hydrolase/Glycosylceramidase activity. Residue E1067 is the Proton donor; for phlorizin hydrolase/Glycosylceramidase activity of the active site. N1176 and N1240 each carry an N-linked (GlcNAc...) asparagine glycan. Catalysis depends on E1274, which acts as the Nucleophile; for phlorizin hydrolase/Glycosylceramidase activity. N-linked (GlcNAc...) asparagine glycans are attached at residues N1281 and N1509. The glycosyl hydrolase-1 4; Region IV. Lactase activity stretch occupies residues 1374–1847 (LYGEFPKGFI…CNGFPDPAQG (474 aa)). E1539 acts as the Proton donor; for lactase activity in catalysis. N1657 and N1684 each carry an N-linked (GlcNAc...) asparagine glycan. Catalysis depends on E1750, which acts as the Nucleophile; for lactase activity. Residues N1762 and N1815 are each glycosylated (N-linked (GlcNAc...) asparagine). Residues 1884 to 1902 (ALYVLFALLLLGACSLAFL) form a helical membrane-spanning segment. The Cytoplasmic portion of the chain corresponds to 1903–1928 (TYNTGRRSKQGNAQPSQHQLSPISSF).

It belongs to the glycosyl hydrolase 1 family. As to quaternary structure, homodimer. In terms of processing, N-glycosylated. Intestine.

It is found in the apical cell membrane. It catalyses the reaction lactose + H2O = beta-D-galactose + D-glucose. The catalysed reaction is phlorizin + H2O = phloretin + beta-D-glucose. It carries out the reaction D-cellobiose + H2O = beta-D-glucose + D-glucose. The enzyme catalyses quercetin 4'-O-beta-D-glucoside + H2O = quercetin + beta-D-glucose. It catalyses the reaction quercetin 3-O-beta-D-glucoside + H2O = quercetin + beta-D-glucose. The catalysed reaction is kaempferol 3-O-beta-D-glucoside + H2O = kaempferol + beta-D-glucose. It carries out the reaction luteolin 7-O-beta-D-glucoside + H2O = luteolin + beta-D-glucose. The enzyme catalyses luteolin 4'-O-beta-D-glucoside + H2O = luteolin + beta-D-glucose. It catalyses the reaction (2S)-naringenin 7-O-beta-D-glucoside + H2O = (2S)-naringenin + beta-D-glucose. The catalysed reaction is eriodictyol-7-O-beta-D-glucoside + H2O = (S)-eriodictyol + beta-D-glucose. It carries out the reaction apigenin 7-O-beta-D-glucoside + H2O = apigenin + beta-D-glucose. The enzyme catalyses daidzein 7-O-beta-D-glucoside + H2O = daidzein + beta-D-glucose + H(+). It catalyses the reaction genistein 7-O-beta-D-glucoside + H2O = genistein + beta-D-glucose. The catalysed reaction is a beta-D-galactosyl-N-acylsphingosine + H2O = a ceramide + beta-D-galactose.. It carries out the reaction beta-D-glucosyl-(1&lt;-&gt;1')-N-hexadecanoylsphing-4-enine + H2O = N-hexadecanoylsphing-4-enine + beta-D-glucose. The enzyme catalyses beta-D-galactosyl-(1&lt;-&gt;1')-N-hexadecanoylsphing-4-enine + H2O = beta-D-galactose + N-hexadecanoylsphing-4-enine. It catalyses the reaction beta-D-galactosyl-(1&lt;-&gt;1')-N-hexadecanoylsphinganine + H2O = N-hexadecanoylsphinganine + beta-D-galactose. The catalysed reaction is beta-D-glucosyl-(1&lt;-&gt;1')-N-hexadecanoylsphinganine + H2O = N-hexadecanoylsphinganine + beta-D-glucose. Functionally, broad specificity glycosidase of the intestinal brush border membrane that hydrolyzes lactose, the main sugar in mammalian milk, to produce D-glucose and D-galactose. The mature protein is composed of two domains that catalyze the hydrolysis of beta-glucopyranosides and beta-galactopyranosides, with a preference for hydrophilic aglycones (in lactose and cellobiose) for one domain and hydrophobic aglycones (in phlorizin and glycosylceramides) for the other. In Rattus norvegicus (Rat), this protein is Lactase/phlorizin hydrolase.